A 239-amino-acid polypeptide reads, in one-letter code: 2,3,4,5-tetrahydropyridine-2,6-dicarboxylate N-acetyltransferase (239 aa).

This sequence belongs to the transferase hexapeptide repeat family. DapH subfamily.

It carries out the reaction (S)-2,3,4,5-tetrahydrodipicolinate + acetyl-CoA + H2O = L-2-acetamido-6-oxoheptanedioate + CoA. It participates in amino-acid biosynthesis; L-lysine biosynthesis via DAP pathway; LL-2,6-diaminopimelate from (S)-tetrahydrodipicolinate (acetylase route): step 1/3. Its function is as follows. Catalyzes the transfer of an acetyl group from acetyl-CoA to tetrahydrodipicolinate. This Staphylococcus aureus (strain JH9) protein is 2,3,4,5-tetrahydropyridine-2,6-dicarboxylate N-acetyltransferase.